The chain runs to 138 residues: Large ribosomal subunit protein uL16 (138 aa).

Basic residues predominate over residues 1 to 13; sequence MLQPSRRKFRKEQ. Residues 1–20 are disordered; the sequence is MLQPSRRKFRKEQKGRNTGV.

It belongs to the universal ribosomal protein uL16 family. In terms of assembly, part of the 50S ribosomal subunit.

Binds 23S rRNA and is also seen to make contacts with the A and possibly P site tRNAs. This Leptothrix cholodnii (strain ATCC 51168 / LMG 8142 / SP-6) (Leptothrix discophora (strain SP-6)) protein is Large ribosomal subunit protein uL16.